The sequence spans 208 residues: FMN-dependent NADH:quinone oxidoreductase (208 aa).

Residues Ser-9, 15 to 17, 96 to 99, and 140 to 143 each bind FMN; these read SAS, MYNF, and TRGG.

It belongs to the azoreductase type 1 family. In terms of assembly, homodimer. It depends on FMN as a cofactor.

The catalysed reaction is 2 a quinone + NADH + H(+) = 2 a 1,4-benzosemiquinone + NAD(+). It carries out the reaction N,N-dimethyl-1,4-phenylenediamine + anthranilate + 2 NAD(+) = 2-(4-dimethylaminophenyl)diazenylbenzoate + 2 NADH + 2 H(+). Functionally, quinone reductase that provides resistance to thiol-specific stress caused by electrophilic quinones. Also exhibits azoreductase activity. Catalyzes the reductive cleavage of the azo bond in aromatic azo compounds to the corresponding amines. The chain is FMN-dependent NADH:quinone oxidoreductase from Ralstonia nicotianae (strain ATCC BAA-1114 / GMI1000) (Ralstonia solanacearum).